An 859-amino-acid chain; its full sequence is Leucine--tRNA ligase (859 aa).

The 'HIGH' region signature appears at 42–52; it reads PYPSGKLHVGH. Positions 611–615 match the 'KMSKS' region motif; that stretch reads KMSKS. Residue lysine 614 participates in ATP binding.

The protein belongs to the class-I aminoacyl-tRNA synthetase family.

It localises to the cytoplasm. The enzyme catalyses tRNA(Leu) + L-leucine + ATP = L-leucyl-tRNA(Leu) + AMP + diphosphate. In Fusobacterium nucleatum subsp. nucleatum (strain ATCC 25586 / DSM 15643 / BCRC 10681 / CIP 101130 / JCM 8532 / KCTC 2640 / LMG 13131 / VPI 4355), this protein is Leucine--tRNA ligase.